We begin with the raw amino-acid sequence, 581 residues long: Arginine--tRNA ligase (581 aa).

The 'HIGH' region motif lies at 126–136 (PNLAKEMHVGH).

The protein belongs to the class-I aminoacyl-tRNA synthetase family. In terms of assembly, monomer.

The protein localises to the cytoplasm. The catalysed reaction is tRNA(Arg) + L-arginine + ATP = L-arginyl-tRNA(Arg) + AMP + diphosphate. This Shewanella baltica (strain OS223) protein is Arginine--tRNA ligase.